A 43-amino-acid chain; its full sequence is Photosystem I reaction center subunit IX (43 aa).

A helical transmembrane segment spans residues 7-27 (YLSTAPVLSTIWFGSLAGLLI).

This sequence belongs to the PsaJ family.

It localises to the plastid. It is found in the chloroplast thylakoid membrane. Its function is as follows. May help in the organization of the PsaE and PsaF subunits. This chain is Photosystem I reaction center subunit IX, found in Vitis vinifera (Grape).